A 215-amino-acid chain; its full sequence is Ribosomal RNA small subunit methyltransferase G (215 aa).

S-adenosyl-L-methionine is bound by residues glycine 73, leucine 78, 125–126 (AE), and arginine 140.

Belongs to the methyltransferase superfamily. RNA methyltransferase RsmG family.

The protein resides in the cytoplasm. Its function is as follows. Specifically methylates the N7 position of guanine in position 518 of 16S rRNA. The protein is Ribosomal RNA small subunit methyltransferase G of Renibacterium salmoninarum (strain ATCC 33209 / DSM 20767 / JCM 11484 / NBRC 15589 / NCIMB 2235).